We begin with the raw amino-acid sequence, 2346 residues long: Myomegalin (2346 aa).

Coiled-coil stretches lie at residues 41-132, 162-205, 238-318, and 350-684; these read REDI…LVEA, DQYT…LLEE, DSHL…REML, and CSQL…RQYL. Glu252 is modified (phosphoserine). The tract at residues 698 to 732 is disordered; it reads NQQAEVTPTGRLGKQTDQGSMQIPSRDDSTSLTAK. Residue Thr704 is modified to Phosphothreonine. Residues 722–732 show a composition bias toward basic and acidic residues; it reads SRDDSTSLTAK. 6 coiled-coil regions span residues 743–936, 1002–1043, 1096–1124, 1212–1240, 1346–1385, and 1431–1455; these read GDLD…TLAA, LQEE…SSVS, SSLQ…EQLV, STQH…SEAT, GKSE…LSVT, and GLQA…LPKN. Residues 1193–1214 are disordered; sequence DNQSQPRDPGPQSAFSLPGSTQ. A compositionally biased stretch (polar residues) spans 1205–1214; the sequence is SAFSLPGSTQ. In terms of domain architecture, Olduvai spans 1551–1642; it reads KDHKSEKDQA…EEKKASPSHS (92 aa). Low complexity predominate over residues 1591 to 1600; that stretch reads SLTPSSSHAL. Disordered stretches follow at residues 1591–1614 and 1633–1690; these read SLTP…SFLS and EEKK…EANQ. Over residues 1652–1690 the composition is skewed to polar residues; the sequence is AVLSSKPSSTSASQGAKAESNSNPISLPTPQNTPKEANQ. 2 coiled-coil regions span residues 1736–1760 and 1840–2077; these read VVSL…ASTV and GADL…QQLE. 2 disordered regions span residues 2081 to 2103 and 2127 to 2156; these read GKAS…PGNK and VFPS…TSPV. The segment covering 2085–2103 has biased composition (polar residues); the sequence is LSPSSINQNFPASTDPGNK. Positions 2273–2312 form a coiled coil; that stretch reads ESTERELLELRTKVSKQERLLQSTTEHLKNANQQKESMEQ.

As to quaternary structure, interacts with PDE4D. Isoform 13 interacts with MAPRE1 and MAPRE3. Isoform 13 forms a pericentrosomal complex with AKAP9, CDK5RAP2 and EB1/MAPRE1; within this complex, may mediate MAPRE1-binding to CDK5RAP2. Interaction of isoform 13 with AKAP9 stabilizes both proteins. Isoform 13 interacts (via N-terminus) with CAMSAP2; this interaction is much stronger in the presence of AKAP9. In complex with AKAP9, Isoform 13 recruits CAMSAP2 to the Golgi apparatus. Isoform 13 interacts with unglycosylated LGALS3BP; this interaction may connect the pericentrosomal complex to the gamma-tubulin ring complex (gamma-TuRC) to promote microtubule assembly and acetylation. As to expression, highly expressed in adult and fetal heart, in skeletal muscle and, to a lower extent, in brain and placenta.

Its subcellular location is the golgi apparatus. It localises to the cytoplasm. The protein localises to the cytoskeleton. It is found in the microtubule organizing center. The protein resides in the centrosome. Its function is as follows. Functions as an anchor sequestering components of the cAMP-dependent pathway to Golgi and/or centrosomes. In terms of biological role, participates in microtubule dynamics, promoting microtubule assembly. Depending upon the cell context, may act at the level of the Golgi apparatus or that of the centrosome. In complex with AKAP9, recruits CAMSAP2 to the Golgi apparatus and tethers non-centrosomal minus-end microtubules to the Golgi, an important step for polarized cell movement. In complex with AKAP9, EB1/MAPRE1 and CDK5RAP2, contributes to microtubules nucleation and extension from the centrosome to the cell periphery, a crucial process for directed cell migration, mitotic spindle orientation and cell-cycle progression. The protein is Myomegalin (PDE4DIP) of Homo sapiens (Human).